The chain runs to 156 residues: Ecotin (156 aa).

An N-terminal signal peptide occupies residues Met-1–Ala-19. A disulfide bridge connects residues Cys-65 and Cys-102.

The protein belongs to the protease inhibitor I11 (ecotin) family. As to quaternary structure, homodimer.

It localises to the periplasm. In terms of biological role, general inhibitor of family S1 serine proteases. The sequence is that of Ecotin from Pseudomonas aeruginosa (strain ATCC 15692 / DSM 22644 / CIP 104116 / JCM 14847 / LMG 12228 / 1C / PRS 101 / PAO1).